Reading from the N-terminus, the 944-residue chain is Protocadherin gamma-C5 (944 aa).

The first 29 residues, 1–29 (MGPKTLPQLAGKWQVLCMLSLCCWGWVSG), serve as a signal peptide directing secretion. Cadherin domains follow at residues 30–133 (QLRY…SPSF), 134–242 (ATPE…APTF), 243–350 (QSSV…APEV), 351–454 (LLAS…APRF), 455–564 (NQQL…APAV), and 571–677 (WEHS…MPKS). The Extracellular portion of the chain corresponds to 30–693 (QLRYSVVEES…PPERSDLTLY (664 aa)). Asparagine 265, asparagine 443, and asparagine 547 each carry an N-linked (GlcNAc...) asparagine glycan. Residues 694–714 (LIVALATVSLLSLVTFTFLSA) traverse the membrane as a helical segment. Residues 715–944 (KCLQGNADGD…KKKSGKKEKK (230 aa)) lie on the Cytoplasmic side of the membrane. 3 disordered regions span residues 722 to 747 (DGDG…QSSP), 812 to 853 (SNTL…WPNN), and 914 to 944 (ATLT…KEKK). Polar residues predominate over residues 820 to 853 (QQAPPNTDWRFSQAQRPGTSGSQNGDDTGTWPNN). A compositionally biased stretch (basic residues) spans 934–944 (NKKKSGKKEKK).

The protein resides in the cell membrane. Potential calcium-dependent cell-adhesion protein. May be involved in the establishment and maintenance of specific neuronal connections in the brain. The polypeptide is Protocadherin gamma-C5 (PCDHGC5) (Pan troglodytes (Chimpanzee)).